We begin with the raw amino-acid sequence, 431 residues long: Ornithine aminotransferase, mitochondrial (431 aa).

An N6-(pyridoxal phosphate)lysine modification is found at Lys286.

Belongs to the class-III pyridoxal-phosphate-dependent aminotransferase family. Homotetramer. The cofactor is pyridoxal 5'-phosphate.

It is found in the mitochondrion matrix. It catalyses the reaction a 2-oxocarboxylate + L-ornithine = L-glutamate 5-semialdehyde + an L-alpha-amino acid. The protein operates within amino-acid biosynthesis; L-proline biosynthesis; L-glutamate 5-semialdehyde from L-ornithine: step 1/1. The polypeptide is Ornithine aminotransferase, mitochondrial (Oat) (Drosophila melanogaster (Fruit fly)).